The primary structure comprises 358 residues: L-Ala-D/L-Glu epimerase (358 aa).

The substrate site is built by Arg-24, Thr-135, and Lys-160. Lys-162 (proton acceptor; specific for (R)-substrate epimerization) is an active-site residue. Residues Asp-190, Glu-218, and Asp-243 each coordinate Mg(2+). Lys-267 (proton acceptor; specific for (S)-substrate epimerization) is an active-site residue. Substrate-binding residues include Cys-295, Asp-320, and Asp-322.

Belongs to the mandelate racemase/muconate lactonizing enzyme family. Mg(2+) is required as a cofactor.

It carries out the reaction L-alanyl-L-glutamate = L-alanyl-D-glutamate. It participates in cell wall degradation; peptidoglycan degradation. Functionally, catalyzes the epimerization of L-Ala-D-Glu to L-Ala-L-Glu and has probably a role in the metabolism of the murein peptide, of which L-Ala-D-Glu is a component. Is also able to catalyze the epimerization of L-Ala-D-Asp. In Clostridium acetobutylicum (strain ATCC 824 / DSM 792 / JCM 1419 / IAM 19013 / LMG 5710 / NBRC 13948 / NRRL B-527 / VKM B-1787 / 2291 / W), this protein is L-Ala-D/L-Glu epimerase.